A 352-amino-acid polypeptide reads, in one-letter code: Sphingosine 1-phosphate receptor 2 (352 aa).

At methionine 1 to lysine 34 the chain is on the extracellular side. Residue asparagine 19 is glycosylated (N-linked (GlcNAc...) asparagine). Residues valine 35–alanine 59 traverse the membrane as a helical segment. Residues arginine 60–serine 66 lie on the Cytoplasmic side of the membrane. Residues alanine 67–histidine 95 form a helical membrane-spanning segment. The Extracellular segment spans residues valine 96 to glutamate 109. Residues glycine 110–isoleucine 128 traverse the membrane as a helical segment. Topologically, residues glutamate 129–arginine 147 are cytoplasmic. A helical transmembrane segment spans residues methionine 148–leucine 173. Residues asparagine 174–histidine 189 lie on the Extracellular side of the membrane. Residues tyrosine 190–valine 210 form a helical membrane-spanning segment. Over arginine 211–lysine 233 the chain is Cytoplasmic. A helical membrane pass occupies residues threonine 234–leucine 255. At aspartate 256 to histidine 271 the chain is on the extracellular side. Residues tyrosine 272–serine 292 traverse the membrane as a helical segment. At arginine 293–valine 352 the chain is on the cytoplasmic side. The S-palmitoyl cysteine moiety is linked to residue cysteine 305. Residues leucine 333–valine 352 form a disordered region.

The protein belongs to the G-protein coupled receptor 1 family. Most abundant in heart and lung; low, but clearly observed in kidney, liver and thymus; much lower but detectable in brain, testis, stomach and intestine. Not significantly detected in any of the sections of embryonic day (E) 14-18, except in embryonic brain.

The protein resides in the cell membrane. Receptor for the lysosphingolipid sphingosine 1-phosphate (S1P). S1P is a bioactive lysophospholipid that elicits diverse physiological effects on most types of cells and tissues. Receptor for the chemokine-like protein FAM19A5. Mediates the inhibitory effect of FAM19A5 on vascular smooth muscle cell proliferation and migration. In lymphoid follicles, couples the binding of S1P to the activation of GNA13 and downstream inhibition of AKT activation leading to suppression of germinal center (GC) B cell growth and migration outside the GC niche. The chain is Sphingosine 1-phosphate receptor 2 (S1pr2) from Mus musculus (Mouse).